The chain runs to 2347 residues: Proto-oncogene tyrosine-protein kinase ROS (2347 aa).

Residues Met-1–Cys-27 form the signal peptide. Topologically, residues Thr-28 to Glu-1859 are extracellular. Residues Asn-52, Asn-114, and Asn-123 are each glycosylated (N-linked (GlcNAc...) asparagine). 2 consecutive Fibronectin type-III domains span residues Leu-101 to Thr-196 and Ala-197 to Ala-285. Residues Asn-324, Asn-352, Asn-396, Asn-471, Asn-607, Asn-628, Asn-706, Asn-714, Asn-732, Asn-939, Asn-961, Asn-1015, Asn-1087, Asn-1090, Asn-1095, Asn-1211, Asn-1272, Asn-1330, Asn-1458, Asn-1461, Asn-1474, Asn-1499, Asn-1565, Asn-1669, Asn-1715, Asn-1738, and Asn-1808 are each glycosylated (N-linked (GlcNAc...) asparagine). Positions Leu-557–Pro-671 constitute a Fibronectin type-III 3 domain. Fibronectin type-III domains follow at residues Ile-947–Ser-1042 and Ala-1043–Ile-1150. Fibronectin type-III domains are found at residues Asp-1450–Gly-1556, Val-1557–Phe-1656, Thr-1658–Gly-1751, and Val-1752–Asp-1854. The helical transmembrane segment at Thr-1860–Trp-1882 threads the bilayer. Over His-1883 to Asp-2347 the chain is Cytoplasmic. A Protein kinase domain is found at Leu-1945 to Phe-2222. Residues Leu-1951 to Val-1959 and Lys-1980 each bind ATP. The Proton acceptor role is filled by Asp-2079. Tyr-2274 carries the phosphotyrosine; by autocatalysis modification. A disordered region spans residues Gly-2284 to Ala-2311. Positions Gly-2301–Ala-2311 are enriched in basic and acidic residues. Tyr-2334 bears the Phosphotyrosine; by autocatalysis mark.

This sequence belongs to the protein kinase superfamily. Tyr protein kinase family. Insulin receptor subfamily. As to quaternary structure, interacts with PTPN6 (via SH2 1 domain); the interaction is direct and promotes ROS1 dephosphorylation. Interacts with PTPN11; may activate the PI3 kinase-mTOR signaling pathway. Interacts with VAV3; constitutive interaction mediating VAV3 phosphorylation. Post-translationally, phosphorylated. Probably autophosphorylates. Phosphorylation at Tyr-2274 is required for the interaction with PTPN6 that mediates ROS1 dephosphorylation. Phosphorylation at Tyr-2274 stimulates the kinase activity and the activation of the ERK1 signaling cascade. Phosphorylation at Tyr-2274 and/or Tyr-2334 recruits PTPN11. Expressed in brain. Expression is increased in primary gliomas.

The protein resides in the cell membrane. It catalyses the reaction L-tyrosyl-[protein] + ATP = O-phospho-L-tyrosyl-[protein] + ADP + H(+). Its activity is regulated as follows. Inhibited by dephosphorylation by PTPN6. Receptor tyrosine kinase (RTK) that plays a role in epithelial cell differentiation and regionalization of the proximal epididymal epithelium. NELL2 is an endogenous ligand for ROS1. Upon endogenous stimulation by NELL2, ROS1 activates the intracellular signaling pathway and triggers epididymal epithelial differentiation and subsequent sperm maturation. May activate several downstream signaling pathways related to cell differentiation, proliferation, growth and survival including the PI3 kinase-mTOR signaling pathway. Mediates the phosphorylation of PTPN11, an activator of this pathway. May also phosphorylate and activate the transcription factor STAT3 to control anchorage-independent cell growth. Mediates the phosphorylation and the activation of VAV3, a guanine nucleotide exchange factor regulating cell morphology. May activate other downstream signaling proteins including AKT1, MAPK1, MAPK3, IRS1 and PLCG2. This Homo sapiens (Human) protein is Proto-oncogene tyrosine-protein kinase ROS (ROS1).